The primary structure comprises 618 residues: MKKDVRILLVGEPRVGKTSLIMSLVSEEFPEEVPPRAEEITIPADVTPERVPTHIVDYSEAEQSDEQLHQEISQANVICIVYAVNNKHSIDKVTSRWIPLINERTDKDSRLPLILVGNKSDLVEYSSMETILPIMNQYTEIETCVECSAKNLKNISELFYYAQKAVLHPTGPLYCPEEKEMKPACIKALTRIFKISDQDNDGTLNDAELNFFQRICFNTPLAPQALEDVKNVVRKHISDGVADSGLTLKGFLFLHTLFIQRGRHETTWTVLRRFGYDDDLDLTPEYLFPLLKIPPDCTTELNHHAYLFLQSTFDKHDLDRDCALSPDELKDLFKVFPYIPWGPDVNNTVCTNERGWITYQGFLSQWTLTTYLDVQRCLEYLGYLGYSILTEQESQASAVTVTRDKKIDLQKKQTQRNVFRCNVIGVKNCGKSGVLQALLGRNLMRQKKIREDHKSYYAINTVYVYGQEKYLLLHDISESEFLTEAEIICDVVCLVYDVSNPKSFEYCARIFKQHFMDSRIPCLIVAAKSDLHEVKQEYSISPTDFCRKHKMPPPQAFTCNTADAPSKDIFVKLTTMAMYPHVTQADLKSSTFWLRASFGATVFAVLGFAMYKALLKQR.

At 1-592 (MKKDVRILLV…TQADLKSSTF (592 aa)) the chain is on the cytoplasmic side. Positions 2–168 (KKDVRILLVG…FYYAQKAVLH (167 aa)) constitute a Miro 1 domain. 5 residues coordinate GTP: R14, G16, K17, T18, and S19. Position 18 (T18) interacts with Mg(2+). P35 and D57 together coordinate Mg(2+). Position 59 (S59) interacts with GTP. Position 92 is an N6-acetyllysine (K92). Residues N118, K119, D121, A149, and K150 each contribute to the GTP site. A Glycyl lysine isopeptide (Lys-Gly) (interchain with G-Cter in ubiquitin) cross-link involves residue K153. The EF-hand 1 domain occupies 184–219 (ACIKALTRIFKISDQDNDGTLNDAELNFFQRICFNT). 5 residues coordinate Ca(2+): D197, D199, D201, T203, and E208. K235 participates in a covalent cross-link: Glycyl lysine isopeptide (Lys-Gly) (interchain with G-Cter in ubiquitin). The EF-hand 2 domain maps to 304–339 (HAYLFLQSTFDKHDLDRDCALSPDELKDLFKVFPYI). 5 residues coordinate Ca(2+): D317, D319, D321, A323, and E328. Residues 416–579 (RNVFRCNVIG…FVKLTTMAMY (164 aa)) form the Miro 2 domain. GTP contacts are provided by N428, C429, G430, K431, S432, G433, and K447. Residue N428 participates in Mg(2+) binding. Residues N428, C429, G430, K431, S432, G433, K447, K454, S477, E478, K528, D530, T558, C559, and N560 each coordinate GDP. Residues K528, D530, T558, and C559 each contribute to the GTP site. K572 participates in a covalent cross-link: Glycyl lysine isopeptide (Lys-Gly) (interchain with G-Cter in ubiquitin). A helical; Anchor for type IV membrane protein transmembrane segment spans residues 593–615 (WLRASFGATVFAVLGFAMYKALL). Over 616–618 (KQR) the chain is Mitochondrial intermembrane.

The protein belongs to the mitochondrial Rho GTPase family. In terms of assembly, homodimer. Interacts with the kinesin-binding proteins TRAK1/OIP106 and TRAK2/GRIF1, forming a link between mitochondria and the trafficking apparatus of the microtubules. Interacts with RAP1GDS1. Interacts with ARMCX1. Found in a complex with KIF5B, OGT, RHOT2 and TRAK1. Post-translationally, ubiquitinated by PRKN during mitophagy, leading to its degradation and enhancement of mitophagy. Deubiquitinated by USP30. In terms of processing, acetylation on Lys-92 decreases sensitivity of mitochondrial transport to elevated Ca(2+) levels, increases mitochondrial transport and promotes axon growth. Deacetylated by HDAC6 which blocks mitochondrial transport and mediates axon growth inhibition. In terms of tissue distribution, ubiquitously expressed. Expressed at high level in heart and skeletal muscle.

It is found in the mitochondrion outer membrane. The catalysed reaction is GTP + H2O = GDP + phosphate + H(+). The enzyme catalyses ATP + H2O = ADP + phosphate + H(+). It catalyses the reaction UTP + H2O = UDP + phosphate + H(+). Functionally, atypical mitochondrial nucleoside-triphosphatase (NTPase) involved in mitochondrial trafficking. Probably involved in control of anterograde transport of mitochondria and their subcellular distribution. Promotes mitochondrial fission during high calcium conditions. Can hydrolyze GTP, ATP and UTP. This chain is Mitochondrial Rho GTPase 1 (RHOT1), found in Homo sapiens (Human).